Consider the following 113-residue polypeptide: Kita-kyushu lung cancer antigen 1 (113 aa).

Over 1–3 (MNF) the chain is Cytoplasmic. Residues 4-21 (YLLLASSILCALIVFWKY) form a helical; Signal-anchor for type II membrane protein membrane-spanning segment. Residues 22-113 (RRFQRNTGEM…RGASPHRKST (92 aa)) lie on the Extracellular side of the membrane. N-linked (GlcNAc...) asparagine glycosylation occurs at asparagine 83.

As to expression, specifically expressed in testis. Expressed by cancer cell lines.

It localises to the cell membrane. The chain is Kita-kyushu lung cancer antigen 1 (CT83) from Homo sapiens (Human).